Here is a 677-residue protein sequence, read N- to C-terminus: Methionine--tRNA ligase (677 aa).

A 'HIGH' region motif is present at residues 15 to 25; the sequence is PYANGSIHLGH. Zn(2+)-binding residues include Cys146, Cys149, Cys159, and Cys162. The short motif at 333–337 is the 'KMSKS' region element; the sequence is KMSKS. Lys336 provides a ligand contact to ATP. Positions 576 to 677 constitute a tRNA-binding domain; the sequence is DFAKIDLRVA…EGAKPGMRVK (102 aa).

Belongs to the class-I aminoacyl-tRNA synthetase family. MetG type 1 subfamily. As to quaternary structure, homodimer. It depends on Zn(2+) as a cofactor.

It is found in the cytoplasm. It catalyses the reaction tRNA(Met) + L-methionine + ATP = L-methionyl-tRNA(Met) + AMP + diphosphate. Functionally, is required not only for elongation of protein synthesis but also for the initiation of all mRNA translation through initiator tRNA(fMet) aminoacylation. This chain is Methionine--tRNA ligase, found in Aeromonas hydrophila subsp. hydrophila (strain ATCC 7966 / DSM 30187 / BCRC 13018 / CCUG 14551 / JCM 1027 / KCTC 2358 / NCIMB 9240 / NCTC 8049).